Here is a 691-residue protein sequence, read N- to C-terminus: Kinetochore protein NDC80 (691 aa).

Residues 1-95 are disordered; it reads MQSSTSTDQH…LNDKSNSRNS (95 aa). Residues 10-19 show a composition bias toward basic and acidic residues; that stretch reads HVLHHMDPHR. The span at 20–42 shows a compositional bias: polar residues; that stretch reads FTSQIPTATSSQLRRRNSTNQGL. Residue T38 is modified to Phosphothreonine. The segment covering 54-65 has biased composition (low complexity); sequence TISGTGIPTGGI. T248 carries the phosphothreonine modification. 2 coiled-coil regions span residues 376-446 and 522-686; these read GKLE…SIKS and KKSI…FETE.

Belongs to the NDC80/HEC1 family. As to quaternary structure, component of the NDC80 complex, which consists of NDC80, NUF2, SPC24 and SPC25. The NDC80 complex is formed by two subcomplexes, NDC80-NUF2 and SPC24-SPC25, which are joined end-to-end through their coiled-coil domains. It has a rod-like structure with a length of 570 Angstroms and globular domains at either end. The NDC80-NUF2 globular domains are probably directed to microtubules, the SPC24-SPC25 globular domains to the centromere. NDC80 probably interacts with SMC1 and SMC2. Also interacts with KIN3. Interacts with DMC1.

Its subcellular location is the nucleus. The protein localises to the chromosome. It is found in the centromere. The protein resides in the kinetochore. Its function is as follows. Acts as a component of the essential kinetochore-associated NDC80 complex, which is involved in chromosome segregation and spindle checkpoint activity. The protein is Kinetochore protein NDC80 of Saccharomyces cerevisiae (strain ATCC 204508 / S288c) (Baker's yeast).